The following is a 428-amino-acid chain: Probable methanogen homoaconitase large subunit (428 aa).

The [4Fe-4S] cluster site is built by cysteine 304, cysteine 364, and cysteine 367.

Belongs to the aconitase/IPM isomerase family. LeuC type 2 subfamily. Heterotetramer of 2 HacA and 2 HacB proteins.

It carries out the reaction (2R)-homocitrate = (2R,3S)-homoisocitrate. It catalyses the reaction (2R)-homocitrate = cis-homoaconitate + H2O. The catalysed reaction is (2R,3S)-homoisocitrate = cis-homoaconitate + H2O. The enzyme catalyses cis-(homo)2aconitate + H2O = (2R,3S)-iso(homo)2citrate. It carries out the reaction cis-(homo)3aconitate + H2O = (2R,3S)-iso(homo)3citrate. It participates in organic acid metabolism; 2-oxosuberate biosynthesis. Component of a hydro-lyase with broad substrate specificity for cis-unsaturated tricarboxylic acids. Catalyzes both the reversible dehydration of (R)-homocitrate ((R)-2-hydroxybutane-1,2,4-tricarboxylate) to produce cis-homoaconitate ((Z)-but-1-ene-1,2,4-tricarboxylate), and its hydration to homoisocitrate ((1R,2S)-1-hydroxybutane-1,2,4-tricarboxylate). Is also able to hydrate the analogous longer chain substrates cis-homo(2)-aconitate, cis-homo(3)-aconitate. These reactions are part of the biosynthesis pathway of coenzyme B. The protein is Probable methanogen homoaconitase large subunit (hacA) of Methanothermobacter thermautotrophicus (strain ATCC 29096 / DSM 1053 / JCM 10044 / NBRC 100330 / Delta H) (Methanobacterium thermoautotrophicum).